A 127-amino-acid polypeptide reads, in one-letter code: Small ribosomal subunit protein uS12 (127 aa).

Asp89 is modified (3-methylthioaspartic acid). The interval Ala101–Lys127 is disordered. A compositionally biased stretch (basic residues) spans Thr111–Lys127.

Belongs to the universal ribosomal protein uS12 family. As to quaternary structure, part of the 30S ribosomal subunit. Contacts proteins S8 and S17. May interact with IF1 in the 30S initiation complex.

Its function is as follows. With S4 and S5 plays an important role in translational accuracy. In terms of biological role, interacts with and stabilizes bases of the 16S rRNA that are involved in tRNA selection in the A site and with the mRNA backbone. Located at the interface of the 30S and 50S subunits, it traverses the body of the 30S subunit contacting proteins on the other side and probably holding the rRNA structure together. The combined cluster of proteins S8, S12 and S17 appears to hold together the shoulder and platform of the 30S subunit. This chain is Small ribosomal subunit protein uS12, found in Flavobacterium psychrophilum (strain ATCC 49511 / DSM 21280 / CIP 103535 / JIP02/86).